A 1389-amino-acid polypeptide reads, in one-letter code: DNA-directed RNA polymerase subunit beta' (1389 aa).

The Zn(2+) site is built by Cys-73, Cys-75, Cys-88, and Cys-91. 3 residues coordinate Mg(2+): Asp-464, Asp-466, and Asp-468. Residues Cys-810, Cys-884, Cys-891, and Cys-894 each coordinate Zn(2+).

It belongs to the RNA polymerase beta' chain family. In terms of assembly, the RNAP catalytic core consists of 2 alpha, 1 beta, 1 beta' and 1 omega subunit. When a sigma factor is associated with the core the holoenzyme is formed, which can initiate transcription. It depends on Mg(2+) as a cofactor. Zn(2+) is required as a cofactor.

It carries out the reaction RNA(n) + a ribonucleoside 5'-triphosphate = RNA(n+1) + diphosphate. In terms of biological role, DNA-dependent RNA polymerase catalyzes the transcription of DNA into RNA using the four ribonucleoside triphosphates as substrates. The protein is DNA-directed RNA polymerase subunit beta' of Pelagibacter ubique (strain HTCC1062).